Reading from the N-terminus, the 331-residue chain is Olfactory receptor 7E178 (331 aa).

Topologically, residues 1 to 47 (MMDRYSFIMHQHRDDTVWCPSKIEEQNITRISEFHLMGLSDDLQLQP) are extracellular. An N-linked (GlcNAc...) asparagine glycan is attached at asparagine 27. A helical transmembrane segment spans residues 48 to 68 (ILFGLFLSMYLVTLLGNLLII). Residues 69 to 80 (LTVSSDSHLHSP) are Cytoplasmic-facing. A helical membrane pass occupies residues 81 to 100 (MYFFLSNLSLADVSFTSTTL). Residues 101 to 119 (PKMIVDIQTHNRAISYSGC) are Extracellular-facing. A disulfide bond links cysteine 119 and cysteine 201. The chain crosses the membrane as a helical span at residues 120 to 140 (LTQMSFFMLFGCLDSLLLTAM). The Cytoplasmic portion of the chain corresponds to 141 to 164 (AYDRFVAICHPLHYQFIMNPRLCG). The helical transmembrane segment at 165 to 185 (LLVFLSVLISLFVSQLHNSVV) threads the bilayer. Residues 186–218 (LQLTYFKSVDISHFFCDPSQLLNLACSDTFTNN) lie on the Extracellular side of the membrane. A helical membrane pass occupies residues 219-239 (IVMYFVGAISGFLPISGIFFS). The Cytoplasmic portion of the chain corresponds to 240 to 266 (YYKIVSSILRMPSPGGKYKAFSTCGSH). A helical membrane pass occupies residues 267–287 (LSVVCLFYGTGLGVYLSSAVS). Residues 288 to 293 (LSPRKG) are Extracellular-facing. Residues 294-314 (AVASIVYTVVTPMLNPFIYSL) form a helical membrane-spanning segment. Topologically, residues 315 to 331 (RNQDIKRAMWRLLRKTV) are cytoplasmic.

The protein belongs to the G-protein coupled receptor 1 family.

It is found in the cell membrane. Functionally, odorant receptor. The protein is Olfactory receptor 7E178 of Mus musculus (Mouse).